Consider the following 455-residue polypeptide: Ribulose bisphosphate carboxylase large chain (455 aa).

At K5 the chain carries N6,N6,N6-trimethyllysine. Positions 114 and 164 each coordinate substrate. K166 functions as the Proton acceptor in the catalytic mechanism. K168 serves as a coordination point for substrate. The Mg(2+) site is built by K192, D194, and E195. Position 192 is an N6-carboxylysine (K192). The Proton acceptor role is filled by H285. Residues R286, H318, and S370 each coordinate substrate.

This sequence belongs to the RuBisCO large chain family. Type I subfamily. As to quaternary structure, heterohexadecamer of 8 large chains and 8 small chains; disulfide-linked. The disulfide link is formed within the large subunit homodimers. The cofactor is Mg(2+). In terms of processing, the disulfide bond which can form in the large chain dimeric partners within the hexadecamer appears to be associated with oxidative stress and protein turnover.

It is found in the plastid. Its subcellular location is the chloroplast. It carries out the reaction 2 (2R)-3-phosphoglycerate + 2 H(+) = D-ribulose 1,5-bisphosphate + CO2 + H2O. The enzyme catalyses D-ribulose 1,5-bisphosphate + O2 = 2-phosphoglycolate + (2R)-3-phosphoglycerate + 2 H(+). In terms of biological role, ruBisCO catalyzes two reactions: the carboxylation of D-ribulose 1,5-bisphosphate, the primary event in carbon dioxide fixation, as well as the oxidative fragmentation of the pentose substrate in the photorespiration process. Both reactions occur simultaneously and in competition at the same active site. This chain is Ribulose bisphosphate carboxylase large chain, found in Lupinus paraguariensis (Lupine).